The primary structure comprises 77 residues: Liver-expressed antimicrobial peptide 2 (77 aa).

An N-terminal signal peptide occupies residues 1-22 (MWHLKLCAVLMIFLLLLGQIDG). A propeptide spanning residues 23-37 (SPIPEVSSAKRRPRR) is cleaved from the precursor. Disulfide bonds link C54/C65 and C60/C70.

This sequence belongs to the LEAP2 family.

Its subcellular location is the secreted. Has an antimicrobial activity. This is Liver-expressed antimicrobial peptide 2 (LEAP2) from Homo sapiens (Human).